We begin with the raw amino-acid sequence, 451 residues long: Cindoxin reductase (451 aa).

4 residues coordinate FAD: Ala-24, Glu-45, Leu-53, and Val-89. NADP(+)-binding positions include Asn-157–Val-160 and Arg-197–Ser-198. FAD is bound by residues Trp-338 and Gly-345–Ile-347. NADP(+) is bound at residue Gly-345.

It belongs to the ferredoxin--NADP reductase type 1 family. It depends on FAD as a cofactor.

In terms of biological role, involved in the degradation of cineol (eucalyptol). Catalyzes the reduction of cindoxin (CinC). This is Cindoxin reductase (cinB) from Citrobacter braakii.